Here is a 377-residue protein sequence, read N- to C-terminus: Actin-related protein T2 (377 aa).

This sequence belongs to the actin family.

It is found in the cytoplasm. It localises to the cytoskeleton. This is Actin-related protein T2 (Actrt2) from Mus musculus (Mouse).